We begin with the raw amino-acid sequence, 276 residues long: Large ribosomal subunit protein uL2 (276 aa).

2 disordered regions span residues 36-58 (PLHK…GGGH) and 214-276 (LGKR…RRKK).

Belongs to the universal ribosomal protein uL2 family. Part of the 50S ribosomal subunit. Forms a bridge to the 30S subunit in the 70S ribosome.

Functionally, one of the primary rRNA binding proteins. Required for association of the 30S and 50S subunits to form the 70S ribosome, for tRNA binding and peptide bond formation. It has been suggested to have peptidyltransferase activity; this is somewhat controversial. Makes several contacts with the 16S rRNA in the 70S ribosome. The protein is Large ribosomal subunit protein uL2 of Halalkalibacterium halodurans (strain ATCC BAA-125 / DSM 18197 / FERM 7344 / JCM 9153 / C-125) (Bacillus halodurans).